We begin with the raw amino-acid sequence, 153 residues long: Superoxide dismutase [Cu-Zn] (153 aa).

Cu cation is bound by residues H45, H47, and H62. Residues C56 and C145 are joined by a disulfide bond. Zn(2+)-binding residues include H62, H70, H79, and D82. Position 119 (H119) interacts with Cu cation.

The protein belongs to the Cu-Zn superoxide dismutase family. Homodimer. The cofactor is Cu cation. Zn(2+) is required as a cofactor.

It localises to the cytoplasm. It carries out the reaction 2 superoxide + 2 H(+) = H2O2 + O2. Functionally, destroys radicals which are normally produced within the cells and which are toxic to biological systems. The protein is Superoxide dismutase [Cu-Zn] of Drosophila virilis (Fruit fly).